We begin with the raw amino-acid sequence, 289 residues long: MAGAKEIRTKIASVKSTQKITKAMEMVAASKMRKTQERMSSSRPYSETIRNVISHVSKATIGYKHPFLVDREVKKVGMIVVSTDRGLCGGLNVNLFKTVLNEMKEWKEKDVSVQLSLIGSKSINFFQSLGIKILTQDSGIGDTPSVEQLIGSVNSMIDAYKKGEVDVVYLVYNKFINTMSQKPVLEKLIPLPELDNDELGERKQVWDYIYEPDAKVLLDNLLVRYLESQVYQAAVENLASEQAARMVAMKAATDNAGNLINELQLVYNKARQASITNELNEIVAGAAAI.

It belongs to the ATPase gamma chain family. F-type ATPases have 2 components, CF(1) - the catalytic core - and CF(0) - the membrane proton channel. CF(1) has five subunits: alpha(3), beta(3), gamma(1), delta(1), epsilon(1). CF(0) has three main subunits: a, b and c.

The protein resides in the cell inner membrane. In terms of biological role, produces ATP from ADP in the presence of a proton gradient across the membrane. The gamma chain is believed to be important in regulating ATPase activity and the flow of protons through the CF(0) complex. This Pasteurella multocida (strain Pm70) protein is ATP synthase gamma chain.